A 423-amino-acid polypeptide reads, in one-letter code: MLDIKLIREQPDEVKRRLARCGVDGAVVDQVLAFDEQRRRLIYEVETRKAERNTVSKQIGAMKDPAERQAKIDAMRQLGDEIAALDRQLAEVEEQQRAVMLEIRNLPHPDVPDGVDDRDNVVIYQEGEERQLPFPARPHWELGEALGIIDFERGVKLAGSRFYVMRGAGARLQRAVIQWLIDLHLEQGYQEVYTPFVVKESVLWASGQLPKFRDNLYRDEESGLWLVPTAEVPLTSLYADEILDASQLPIYHVAYTPCFRKEQLSAGRDVRGIKRGHQFDKVEMYMFVTPDQSYQALEKLRRDAEECARRLGLPFRTKLLCTGDLGFGSTKTYDIEVWAPGVGEWLEVSSCSNVEAFQARRANLRYRPEPGAKPEFLHTLNGSGLGLPRTIIAIMENYQQEDGSILIPEVLRPYMGGMERIGP.

229-231 (TAE) contributes to the L-serine binding site. 260-262 (RKE) contributes to the ATP binding site. E283 contacts L-serine. 347 to 350 (EVSS) contributes to the ATP binding site. Residue S383 participates in L-serine binding.

This sequence belongs to the class-II aminoacyl-tRNA synthetase family. Type-1 seryl-tRNA synthetase subfamily. In terms of assembly, homodimer. The tRNA molecule binds across the dimer.

The protein localises to the cytoplasm. It carries out the reaction tRNA(Ser) + L-serine + ATP = L-seryl-tRNA(Ser) + AMP + diphosphate + H(+). It catalyses the reaction tRNA(Sec) + L-serine + ATP = L-seryl-tRNA(Sec) + AMP + diphosphate + H(+). It participates in aminoacyl-tRNA biosynthesis; selenocysteinyl-tRNA(Sec) biosynthesis; L-seryl-tRNA(Sec) from L-serine and tRNA(Sec): step 1/1. Its function is as follows. Catalyzes the attachment of serine to tRNA(Ser). Is also able to aminoacylate tRNA(Sec) with serine, to form the misacylated tRNA L-seryl-tRNA(Sec), which will be further converted into selenocysteinyl-tRNA(Sec). The sequence is that of Serine--tRNA ligase from Chloroflexus aurantiacus (strain ATCC 29366 / DSM 635 / J-10-fl).